The following is a 195-amino-acid chain: Large ribosomal subunit protein eL6 (195 aa).

Phosphoserine is present on residues Ser105 and Ser115.

The protein belongs to the eukaryotic ribosomal protein eL6 family. In terms of assembly, component of the large ribosomal subunit (LSU). Mature yeast ribosomes consist of a small (40S) and a large (60S) subunit. The 40S small subunit contains 1 molecule of ribosomal RNA (18S rRNA) and at least 33 different proteins. The large 60S subunit contains 3 rRNA molecules (25S, 5.8S and 5S rRNA) and at least 46 different proteins.

The protein localises to the cytoplasm. Its subcellular location is the nucleus. The protein resides in the nucleolus. Component of the ribosome, a large ribonucleoprotein complex responsible for the synthesis of proteins in the cell. The small ribosomal subunit (SSU) binds messenger RNAs (mRNAs) and translates the encoded message by selecting cognate aminoacyl-transfer RNA (tRNA) molecules. The large subunit (LSU) contains the ribosomal catalytic site termed the peptidyl transferase center (PTC), which catalyzes the formation of peptide bonds, thereby polymerizing the amino acids delivered by tRNAs into a polypeptide chain. The nascent polypeptides leave the ribosome through a tunnel in the LSU and interact with protein factors that function in enzymatic processing, targeting, and the membrane insertion of nascent chains at the exit of the ribosomal tunnel. The sequence is that of Large ribosomal subunit protein eL6 (rpl6) from Schizosaccharomyces pombe (strain 972 / ATCC 24843) (Fission yeast).